The following is a 504-amino-acid chain: MSFSVDVLANIAIELQRGIGHQDRFQRLITTLRQVLECDASALLRYDSRQFIPLAIDGLAKDVLGRRFALEGHPRLEAIARAGDVVRFPADSELPDPYDGLIPGQESLKVHACVGLPLFAGQNLIGALTLDGMQPDQFDVFSDEELRLIAALAAGALSNALLIEQLESQNMMPGDATPFEAVKQTQMIGLSPGMTQLKKEIEIVAASDLNVLISGETGTGKELVAKAIHEASPRAVNPLVYLNCAALPESVAESELFGHVKGAFTGAISNRSGKFEMADNGTLFLDEIGELSLALQAKLLRVLQYGDIQRVGDDRSLRVDVRVLAATNRDLREEVLAGRFRADLFHRLSVFPLSVPPLRERGDDVILLAGYFCEQCRLRLGLSRVVLSAGARNLLQHYRFPGNVRELEHAIHRAVVLARATRNGDEVILEAQHFAFPEVTLPPPEAAAVPVVKQNLREATEAFQRETIRQALAQNHHNWAACARMLETDVANLHRLAKRLGMKD.

Asp-57 bears the 4-aspartylphosphate mark. The 230-residue stretch at 187–416 (MIGLSPGMTQ…LEHAIHRAVV (230 aa)) folds into the Sigma-54 factor interaction domain. Residues 215-222 (GETGTGKE) and 278-287 (ADNGTLFLDE) each bind ATP. Positions 479–498 (WAACARMLETDVANLHRLAK) form a DNA-binding region, H-T-H motif.

The protein operates within nitrogen metabolism; nitric oxide reduction. Functionally, required for the expression of anaerobic nitric oxide (NO) reductase, acts as a transcriptional activator for at least the norVW operon. Activation also requires sigma-54. The chain is Anaerobic nitric oxide reductase transcription regulator NorR from Escherichia coli (strain ATCC 8739 / DSM 1576 / NBRC 3972 / NCIMB 8545 / WDCM 00012 / Crooks).